The primary structure comprises 377 residues: UDP-N-acetylglucosamine--N-acetylmuramyl-(pentapeptide) pyrophosphoryl-undecaprenol N-acetylglucosamine transferase (377 aa).

UDP-N-acetyl-alpha-D-glucosamine contacts are provided by residues Thr11 to Gly13, Asn123, Arg164, Ser194, and Gln295.

Belongs to the glycosyltransferase 28 family. MurG subfamily.

Its subcellular location is the cell inner membrane. It carries out the reaction di-trans,octa-cis-undecaprenyl diphospho-N-acetyl-alpha-D-muramoyl-L-alanyl-D-glutamyl-meso-2,6-diaminopimeloyl-D-alanyl-D-alanine + UDP-N-acetyl-alpha-D-glucosamine = di-trans,octa-cis-undecaprenyl diphospho-[N-acetyl-alpha-D-glucosaminyl-(1-&gt;4)]-N-acetyl-alpha-D-muramoyl-L-alanyl-D-glutamyl-meso-2,6-diaminopimeloyl-D-alanyl-D-alanine + UDP + H(+). Its pathway is cell wall biogenesis; peptidoglycan biosynthesis. Its function is as follows. Cell wall formation. Catalyzes the transfer of a GlcNAc subunit on undecaprenyl-pyrophosphoryl-MurNAc-pentapeptide (lipid intermediate I) to form undecaprenyl-pyrophosphoryl-MurNAc-(pentapeptide)GlcNAc (lipid intermediate II). In Opitutus terrae (strain DSM 11246 / JCM 15787 / PB90-1), this protein is UDP-N-acetylglucosamine--N-acetylmuramyl-(pentapeptide) pyrophosphoryl-undecaprenol N-acetylglucosamine transferase.